A 184-amino-acid polypeptide reads, in one-letter code: Oligoribonuclease (184 aa).

The 164-residue stretch at Leu7–Leu170 folds into the Exonuclease domain. The active site involves Tyr128.

Belongs to the oligoribonuclease family.

It is found in the cytoplasm. Functionally, 3'-to-5' exoribonuclease specific for small oligoribonucleotides. This is Oligoribonuclease from Baumannia cicadellinicola subsp. Homalodisca coagulata.